Consider the following 215-residue polypeptide: Cytochrome b6 (215 aa).

Residues 32-52 (IFYCFGGIVFTCFLVQVATGF) traverse the membrane as a helical segment. Cys35 provides a ligand contact to heme c. Heme b is bound by residues His86 and His100. The next 3 membrane-spanning stretches (helical) occupy residues 90–110 (ASMMVMMMVLHVFRVYLTGGF), 116–136 (LTWVTGVILAVVTVSFGVTGY), and 186–206 (AHTFVLPLAAAVLMLTHFLMI). Heme b-binding residues include His187 and His202.

Belongs to the cytochrome b family. PetB subfamily. In terms of assembly, the 4 large subunits of the cytochrome b6-f complex are cytochrome b6, subunit IV (17 kDa polypeptide, PetD), cytochrome f and the Rieske protein, while the 4 small subunits are PetG, PetL, PetM and PetN. The complex functions as a dimer. The cofactor is heme b. Heme c is required as a cofactor.

Its subcellular location is the plastid. The protein localises to the chloroplast thylakoid membrane. In terms of biological role, component of the cytochrome b6-f complex, which mediates electron transfer between photosystem II (PSII) and photosystem I (PSI), cyclic electron flow around PSI, and state transitions. The chain is Cytochrome b6 from Trieres chinensis (Marine centric diatom).